The primary structure comprises 818 residues: Structure-specific endonuclease subunit SLX4 (818 aa).

Disordered stretches follow at residues 1–39 (MSFL…PSAS), 53–151 (RDPY…SSSN), 279–324 (FSEG…HQDS), 413–437 (NAQF…KTSK), and 587–712 (MLPA…MASE). Residues 28–39 (VIDSSPSVPSAS) show a composition bias toward low complexity. Basic and acidic residues predominate over residues 90–103 (PSERTKDAHGKDRF). Residues 306-316 (TTSTTITSLST) show a composition bias toward low complexity. Polar residues predominate over residues 426–437 (TRSPCSNPKTSK). Residues 604–618 (QMSKRDTIKSRDIRA) show a composition bias toward basic and acidic residues. Composition is skewed to polar residues over residues 621–640 (SRSN…QNTG), 652–672 (SSKS…TQSV), and 696–712 (SLAS…MASE).

Belongs to the SLX4 family. Forms a heterodimer with SLX1. Phosphorylated in response to DNA damage.

The protein localises to the nucleus. In terms of biological role, regulatory subunit of the SLX1-SLX4 structure-specific endonuclease that resolves DNA secondary structures generated during DNA repair and recombination. Has endonuclease activity towards branched DNA substrates, introducing single-strand cuts in duplex DNA close to junctions with ss-DNA. The sequence is that of Structure-specific endonuclease subunit SLX4 from Uncinocarpus reesii (strain UAMH 1704).